The following is a 509-amino-acid chain: ATP synthase subunit alpha (509 aa).

169 to 176 (GDRKTGKT) contacts ATP.

This sequence belongs to the ATPase alpha/beta chains family. In terms of assembly, F-type ATPases have 2 components, CF(1) - the catalytic core - and CF(0) - the membrane proton channel. CF(1) has five subunits: alpha(3), beta(3), gamma(1), delta(1), epsilon(1). CF(0) has three main subunits: a(1), b(2) and c(9-12). The alpha and beta chains form an alternating ring which encloses part of the gamma chain. CF(1) is attached to CF(0) by a central stalk formed by the gamma and epsilon chains, while a peripheral stalk is formed by the delta and b chains.

Its subcellular location is the cell membrane. It catalyses the reaction ATP + H2O + 4 H(+)(in) = ADP + phosphate + 5 H(+)(out). Functionally, produces ATP from ADP in the presence of a proton gradient across the membrane. The alpha chain is a regulatory subunit. The sequence is that of ATP synthase subunit alpha from Limosilactobacillus reuteri (strain DSM 20016) (Lactobacillus reuteri).